We begin with the raw amino-acid sequence, 273 residues long: Probable NAD(P)H dehydrogenase (quinone) FQR1-like 2 (273 aa).

A disordered region spans residues 1–60; the sequence is MGKGGGCVPSKKKKPATTGDGPGIDDDNDATNAPIQIDDDQTTIDGDRTTATNTGGTTTP. Positions 49-60 are enriched in low complexity; that stretch reads TTATNTGGTTTP. Residues 75-263 form the Flavodoxin-like domain; it reads IFVVFYSMYG…ALAEHQGNYM (189 aa). Residues 81 to 85, 183 to 236, and H207 each bind FMN; these read SMYGH and FFVS…SPYG. Position 83 (Y83) interacts with NAD(+).

The protein belongs to the WrbA family. FMN is required as a cofactor.

Its subcellular location is the cell membrane. The enzyme catalyses a quinone + NADH + H(+) = a quinol + NAD(+). It catalyses the reaction a quinone + NADPH + H(+) = a quinol + NADP(+). Its function is as follows. Catalyzes the transfer of electrons from NADH and NADPH to reduce quinone to the hydroquinone state. The protein is Probable NAD(P)H dehydrogenase (quinone) FQR1-like 2 of Arabidopsis thaliana (Mouse-ear cress).